Consider the following 440-residue polypeptide: tRNA-2-methylthio-N(6)-dimethylallyladenosine synthase (440 aa).

Residues 4–122 form the MTTase N-terminal domain; it reads KSYYIITHGC…LPKILERVFE (119 aa). Positions 13, 49, 83, 159, 163, and 166 each coordinate [4Fe-4S] cluster. A Radical SAM core domain is found at 145–375; it reads REPGVRAWVT…IELQNGISLE (231 aa). The TRAM domain occupies 378–440; it reads KNEEGNIHEI…KLFHLEGVLV (63 aa).

It belongs to the methylthiotransferase family. MiaB subfamily. In terms of assembly, monomer. [4Fe-4S] cluster serves as cofactor.

Its subcellular location is the cytoplasm. It catalyses the reaction N(6)-dimethylallyladenosine(37) in tRNA + (sulfur carrier)-SH + AH2 + 2 S-adenosyl-L-methionine = 2-methylsulfanyl-N(6)-dimethylallyladenosine(37) in tRNA + (sulfur carrier)-H + 5'-deoxyadenosine + L-methionine + A + S-adenosyl-L-homocysteine + 2 H(+). Catalyzes the methylthiolation of N6-(dimethylallyl)adenosine (i(6)A), leading to the formation of 2-methylthio-N6-(dimethylallyl)adenosine (ms(2)i(6)A) at position 37 in tRNAs that read codons beginning with uridine. The polypeptide is tRNA-2-methylthio-N(6)-dimethylallyladenosine synthase (Carboxydothermus hydrogenoformans (strain ATCC BAA-161 / DSM 6008 / Z-2901)).